The chain runs to 198 residues: Lipid A 4'-phosphatase (198 aa).

A helical membrane pass occupies residues 143–165 (AGQHTILQVTIGSLIAWGFAYLF).

Belongs to the lipid A LpxF 4'-phosphatase family.

The protein resides in the cell inner membrane. It participates in bacterial outer membrane biogenesis; LPS lipid A biosynthesis. Its function is as follows. Removes the 4'-phosphate group from tetra- and hexaacylated lipid A species, has no 1-phosphatase or Kdo hydrolase activity. Absence of the 4'-phosphate group renders the bacteria resistant to host-derived cationic antimicrobial peptides (CAMP), allowing it to camouflage itself from the host innate immune response, and plays a critical role in the long-term colonization of the host's stomach. This Helicobacter pylori (strain J99 / ATCC 700824) (Campylobacter pylori J99) protein is Lipid A 4'-phosphatase.